The sequence spans 335 residues: UPF0353 protein BCG_1543 (335 aa).

2 helical membrane-spanning segments follow: residues 18–38 (WFFL…LMQL) and 67–87 (VPAI…AGPT). The VWFA domain maps to 98–294 (VVMLVIDVSQ…AELRAVYSSL (197 aa)). A helical membrane pass occupies residues 309 to 329 (VGWLRLGALALALAALAALLI).

This sequence belongs to the UPF0353 family.

It is found in the cell membrane. The protein is UPF0353 protein BCG_1543 of Mycobacterium bovis (strain BCG / Pasteur 1173P2).